Reading from the N-terminus, the 166-residue chain is Endoribonuclease YbeY (166 aa).

H132, H136, and H142 together coordinate Zn(2+).

Belongs to the endoribonuclease YbeY family. Zn(2+) serves as cofactor.

Its subcellular location is the cytoplasm. Functionally, single strand-specific metallo-endoribonuclease involved in late-stage 70S ribosome quality control and in maturation of the 3' terminus of the 16S rRNA. The polypeptide is Endoribonuclease YbeY (Clostridium botulinum (strain Kyoto / Type A2)).